Reading from the N-terminus, the 180-residue chain is Shikimate kinase (180 aa).

An ATP-binding site is contributed by 15-20 (GAGKTT). T19 lines the Mg(2+) pocket. Substrate is bound by residues D37, R61, and G83. Position 121 (R121) interacts with ATP. R140 lines the substrate pocket.

It belongs to the shikimate kinase family. Monomer. Mg(2+) serves as cofactor.

The protein localises to the cytoplasm. The enzyme catalyses shikimate + ATP = 3-phosphoshikimate + ADP + H(+). Its pathway is metabolic intermediate biosynthesis; chorismate biosynthesis; chorismate from D-erythrose 4-phosphate and phosphoenolpyruvate: step 5/7. Catalyzes the specific phosphorylation of the 3-hydroxyl group of shikimic acid using ATP as a cosubstrate. In Psychrobacter sp. (strain PRwf-1), this protein is Shikimate kinase.